The following is a 241-amino-acid chain: Polycomb group RING finger protein 3 (241 aa).

The RING-type zinc finger occupies 17–56; the sequence is CRLCSGYLIDATTVTECLHTFCRSCLVKYLEENNTCPTCR. Positions 115-148 are disordered; that stretch reads AKQHLDPRNGETKADDNSNKETAEEKQEEDNDYH. Positions 117 to 139 are enriched in basic and acidic residues; it reads QHLDPRNGETKADDNSNKETAEE. An interaction with BCORL1 region spans residues 131–241; sequence NSNKETAEEK…LHYRPKMDLL (111 aa).

Component of a PRC1-like complex that contains PCGF3, RNF2 and RYBP. Interacts with RNF2. Interacts with CBX6, CBX7 and CBX8. Interacts with BCORL1.

Its subcellular location is the nucleus. The protein resides in the nucleoplasm. In terms of biological role, component of a Polycomb group (PcG) multiprotein PRC1-like complex, a complex class required to maintain the transcriptionally repressive state of many genes, including Hox genes, throughout development. PcG PRC1 complex acts via chromatin remodeling and modification of histones; it mediates monoubiquitination of histone H2A 'Lys-119', rendering chromatin heritably changed in its expressibility. Within the PRC1-like complex, regulates RNF2 ubiquitin ligase activity. Plays a redundant role with PCGF5 as part of a PRC1-like complex that mediates monoubiquitination of histone H2A 'Lys-119' on the X chromosome and is required for normal silencing of one copy of the X chromosome in XX females. In Mus musculus (Mouse), this protein is Polycomb group RING finger protein 3 (PcgF3).